The following is a 223-amino-acid chain: ATP phosphoribosyltransferase (223 aa).

Belongs to the ATP phosphoribosyltransferase family. Short subfamily. As to quaternary structure, heteromultimer composed of HisG and HisZ subunits.

The protein resides in the cytoplasm. It catalyses the reaction 1-(5-phospho-beta-D-ribosyl)-ATP + diphosphate = 5-phospho-alpha-D-ribose 1-diphosphate + ATP. It functions in the pathway amino-acid biosynthesis; L-histidine biosynthesis; L-histidine from 5-phospho-alpha-D-ribose 1-diphosphate: step 1/9. Catalyzes the condensation of ATP and 5-phosphoribose 1-diphosphate to form N'-(5'-phosphoribosyl)-ATP (PR-ATP). Has a crucial role in the pathway because the rate of histidine biosynthesis seems to be controlled primarily by regulation of HisG enzymatic activity. The chain is ATP phosphoribosyltransferase from Novosphingobium aromaticivorans (strain ATCC 700278 / DSM 12444 / CCUG 56034 / CIP 105152 / NBRC 16084 / F199).